Reading from the N-terminus, the 72-residue chain is DNA-directed RNA polymerase subunit omega (72 aa).

This sequence belongs to the RNA polymerase subunit omega family. As to quaternary structure, the RNAP catalytic core consists of 2 alpha, 1 beta, 1 beta' and 1 omega subunit. When a sigma factor is associated with the core the holoenzyme is formed, which can initiate transcription.

It catalyses the reaction RNA(n) + a ribonucleoside 5'-triphosphate = RNA(n+1) + diphosphate. Promotes RNA polymerase assembly. Latches the N- and C-terminal regions of the beta' subunit thereby facilitating its interaction with the beta and alpha subunits. The chain is DNA-directed RNA polymerase subunit omega from Clostridium botulinum (strain Loch Maree / Type A3).